The sequence spans 187 residues: Ribosome-recycling factor (187 aa).

The protein belongs to the RRF family.

It localises to the cytoplasm. Responsible for the release of ribosomes from messenger RNA at the termination of protein biosynthesis. May increase the efficiency of translation by recycling ribosomes from one round of translation to another. This chain is Ribosome-recycling factor, found in Flavobacterium psychrophilum (strain ATCC 49511 / DSM 21280 / CIP 103535 / JIP02/86).